The primary structure comprises 367 residues: Biotin synthase (367 aa).

Residues 67–291 enclose the Radical SAM core domain; it reads NAVQISTLLS…IAVTRICCPS (225 aa). 3 residues coordinate [4Fe-4S] cluster: C82, C86, and C89. Residues C128, C159, C219, and R295 each coordinate [2Fe-2S] cluster.

It belongs to the radical SAM superfamily. Biotin synthase family. In terms of assembly, homodimer. Requires [4Fe-4S] cluster as cofactor. It depends on [2Fe-2S] cluster as a cofactor.

The catalysed reaction is (4R,5S)-dethiobiotin + (sulfur carrier)-SH + 2 reduced [2Fe-2S]-[ferredoxin] + 2 S-adenosyl-L-methionine = (sulfur carrier)-H + biotin + 2 5'-deoxyadenosine + 2 L-methionine + 2 oxidized [2Fe-2S]-[ferredoxin]. The protein operates within cofactor biosynthesis; biotin biosynthesis; biotin from 7,8-diaminononanoate: step 2/2. Its function is as follows. Catalyzes the conversion of dethiobiotin (DTB) to biotin by the insertion of a sulfur atom into dethiobiotin via a radical-based mechanism. This is Biotin synthase from Psychrobacter sp. (strain PRwf-1).